An 899-amino-acid chain; its full sequence is MSSLYAPTDEVKRRLRPFGLFFEKSLKDLIKGIRSQQSPEQLHEFLTRVLSECREEVKHADFNMKTNAVLKLTYLEMYGFDMSWANFHVLEVMSSTRFQQKRVGYLAASQSFYKDHDILMLATNLLRKDLKYSLSNETVRMGVALSGLSAMVTPELARDICEDLFLMLHSTKPYIRKKAVTALFKVFLQYPEGLRDNFEKFVDRLEDDDLSVVSATVSVICELSKHNPQPFIQLSPILYQMLIKVDNNWVIIRLLKLFTNLAQIEPKLRVKILPNVLELMDSTTAISVVYESINCIVKGNMLNSDDYDSAVACLDKLHDFCTSNDPNLRYLSCVLFYKIGKINTDFIANFDVLILRLLVDVDVSIRSKTLELLEGIVTEDNLVDFVQRLLKQFVDVDKICVNDQEFSIDIPEYYKSKMIHAICKITAMKNYANVTDFEWYIALLSDLCIVSQDLQDKTLAQKLGEQIRNIMVKVPDLRDRTLAQIVQLVKSEDITARLPGVLKECIWCLGEYSSLLDNKDEYILLLAENSKLYEPELQQTLIPAILKIYSNWCNESVVDTGRIKWVTERIITPLEDLIISKNFEVQERSSEALEFLRLCLDSLSEDASDSLPLLLTEVLPSFFNAFELQPITSGTQRKLQQSISVDCDTPFLTESELEQLLADDTSVDGIVSPDVSDTESDSEMYVPGAAPKDKGSSPTHELTTAELEAINERRKQERVGNPFYLDDADVGSVKKVDILDNLSNSKPSSSGSLVRLSSESKAKEKKKKVKVRVISDAVIVDGVNTADVTDDRPSNTPSARNKIALQLKNKLDSFDFTKPRDEGDYDPDVDLQKLREKFAQQRLLDESAAAEEEVVVVKKKKRSKDGSKSSKKKSRSKSKPSSKGGDTAEAELLPGLTTE.

HEAT repeat units follow at residues 37–74 (QSPEQLHEFLTRVLSECREEVKHADFNMKTNAVLKLTY), 155–192 (ELARDICEDLFLMLHSTKPYIRKKAVTALFKVFLQYPE), 194–229 (LRDNFEKFVDRLEDDDLSVVSATVSVICELSKHNPQ), 231–267 (FIQLSPILYQMLIKVDNNWVIIRLLKLFTNLAQIEPK), 268–305 (LRVKILPNVLELMDSTTAISVVYESINCIVKGNMLNSD), 308–344 (DSAVACLDKLHDFCTSNDPNLRYLSCVLFYKIGKINT), 345–382 (DFIANFDVLILRLLVDVDVSIRSKTLELLEGIVTEDNL), 384–428 (DFVQ…ITAM), 480–518 (RTLAQIVQLVKSEDITARLPGVLKECIWCLGEYSSLLDN), 536–580 (ELQQ…LIIS), 590–613 (SEALEFLRLCLDSLSEDASDSLPL), and 614–656 (LLTE…TESE). Disordered regions lie at residues 668–701 (DGIVSPDVSDTESDSEMYVPGAAPKDKGSSPTHE), 741–768 (NLSNSKPSSSGSLVRLSSESKAKEKKKK), 782–801 (GVNTADVTDDRPSNTPSARN), and 849–899 (AAEE…LTTE). Positions 743–759 (SNSKPSSSGSLVRLSSE) are enriched in low complexity. A coiled-coil region spans residues 841-862 (QRLLDESAAAEEEVVVVKKKKR). The span at 857 to 880 (VKKKKRSKDGSKSSKKKSRSKSKP) shows a compositional bias: basic residues.

This sequence belongs to the adaptor complexes large subunit family. Adaptor protein complex 3 (AP-3) is a heterotetramer composed of 2 large adaptins (APL5 and APL6), a medium adaptin (APM3) and a small adaptin (APS3).

It localises to the golgi apparatus. Its subcellular location is the cytoplasmic vesicle. The protein localises to the clathrin-coated vesicle membrane. In terms of biological role, part of the AP-3 complex, an adaptor-related complex which is not clathrin-associated. The complex is associated with the Golgi region as well as more peripheral structures. It facilitates the budding of vesicles from the Golgi membrane and may be directly involved in trafficking to the vacuole. The chain is AP-3 complex subunit delta (APL5) from Eremothecium gossypii (strain ATCC 10895 / CBS 109.51 / FGSC 9923 / NRRL Y-1056) (Yeast).